Here is a 404-residue protein sequence, read N- to C-terminus: Zinc metalloprotease Rip1 (404 aa).

Residues 1–21 traverse the membrane as a helical segment; it reads MMFVTGIVLFALAILISVALH. Histidine 21 contributes to the Zn(2+) binding site. Residue glutamate 22 is part of the active site. Zn(2+) is bound at residue histidine 25. Residues 104–124 form a helical membrane-spanning segment; the sequence is PGMNLAICLVLIYAIALVWGL. One can recognise a PDZ domain in the interval 121–203; it reads VWGLPNLHPP…SVPIVVERDG (83 aa). Aspartate 202 is a binding site for Zn(2+). The next 2 membrane-spanning stretches (helical) occupy residues 313–333 and 373–393; these read LWVA…AINL and LLPA…LTVT.

This sequence belongs to the peptidase M50B family. It depends on Zn(2+) as a cofactor.

The protein localises to the cell membrane. In terms of biological role, a probable site-2 protease (S2P) that cleaves type-2 transmembrane proteins within their membrane-spanning domains. Degrades anti-sigma factors RskA, RslA and RsmA, releasing sigma factors SigK, SigL and SigM from the cellular membrane, activating signaling pathways. Does not act on RsdA. Regulates the composition of extractable mycolic acids in the cell envelope in response to changes in membrane fluidity. Mediates transcriptional regulation of mycolic acid biosynthetic genes in response to detergent. Probably also cleaves PbpB (PBP3, FtsI); this cleavage is inhibited by Wag31-PbpBI interaction. Regulated intramembrane proteolysis (RIP) occurs when an extracytoplasmic signal (possibly oxidative stress) triggers a concerted proteolytic cascade to transmit information and elicit cellular responses. The membrane-spanning regulatory substrate protein (includes anti-sigma factors RskA, RslA, RsmA, and PbpB) is first cut extracytoplasmically (site-1 protease, S1P), then within the membrane itself (site-2 protease, S2P, this entry), while cytoplasmic proteases finish degrading the regulatory protein, liberating the effector protein (ECF sigma factors SigK, SigL and SigM). This is Zinc metalloprotease Rip1 (rip1) from Mycobacterium tuberculosis (strain ATCC 35801 / TMC 107 / Erdman).